A 949-amino-acid chain; its full sequence is Probable transcriptional regulatory protein STB4 (949 aa).

The zn(2)-C6 fungal-type DNA-binding region spans 87–113 (CELCKKRKVKCDGNNPCLNCSKHQKEC). 2 stretches are compositionally biased toward low complexity: residues 164-178 (DGVS…NPNS) and 200-212 (SGSN…NNNS). Disordered regions lie at residues 164-214 (DGVS…NSFP) and 862-888 (GERE…ATRS). Residues 862–874 (GEREENADERQEN) are compositionally biased toward basic and acidic residues.

The protein localises to the nucleus. Binds to SIN3. The protein is Probable transcriptional regulatory protein STB4 (STB4) of Saccharomyces cerevisiae (strain ATCC 204508 / S288c) (Baker's yeast).